We begin with the raw amino-acid sequence, 428 residues long: D-inositol 3-phosphate glycosyltransferase (428 aa).

Histidine 5 is a binding site for 1D-myo-inositol 3-phosphate. UDP-N-acetyl-alpha-D-glucosamine-binding positions include 11–12 (QP) and glycine 19. 1D-myo-inositol 3-phosphate-binding positions include 16 to 21 (DAGGMN), lysine 74, tyrosine 107, threonine 131, and arginine 151. UDP-N-acetyl-alpha-D-glucosamine contacts are provided by arginine 225, lysine 230, and glutamine 283. Residues phenylalanine 292, glutamine 293, and alanine 295 each coordinate Mg(2+). 2 residues coordinate UDP-N-acetyl-alpha-D-glucosamine: glutamate 305 and glutamate 313. Threonine 319 lines the Mg(2+) pocket.

The protein belongs to the glycosyltransferase group 1 family. MshA subfamily. As to quaternary structure, homodimer.

It catalyses the reaction 1D-myo-inositol 3-phosphate + UDP-N-acetyl-alpha-D-glucosamine = 1D-myo-inositol 2-acetamido-2-deoxy-alpha-D-glucopyranoside 3-phosphate + UDP + H(+). Catalyzes the transfer of a N-acetyl-glucosamine moiety to 1D-myo-inositol 3-phosphate to produce 1D-myo-inositol 2-acetamido-2-deoxy-glucopyranoside 3-phosphate in the mycothiol biosynthesis pathway. This chain is D-inositol 3-phosphate glycosyltransferase, found in Mycobacterium leprae (strain Br4923).